Consider the following 262-residue polypeptide: uncharacterized protein (262 aa).

This is an uncharacterized protein from Acanthamoeba polyphaga mimivirus (APMV).